A 212-amino-acid polypeptide reads, in one-letter code: Uracil phosphoribosyltransferase (212 aa).

5-phospho-alpha-D-ribose 1-diphosphate is bound by residues Arg-78, Arg-103, and 130–138 (DPMLATGSS). Uracil is bound by residues Ile-193 and 198–200 (GDA). Asp-199 contacts 5-phospho-alpha-D-ribose 1-diphosphate.

It belongs to the UPRTase family. Mg(2+) serves as cofactor.

It catalyses the reaction UMP + diphosphate = 5-phospho-alpha-D-ribose 1-diphosphate + uracil. The protein operates within pyrimidine metabolism; UMP biosynthesis via salvage pathway; UMP from uracil: step 1/1. Allosterically activated by GTP. Catalyzes the conversion of uracil and 5-phospho-alpha-D-ribose 1-diphosphate (PRPP) to UMP and diphosphate. In Pseudomonas fluorescens (strain ATCC BAA-477 / NRRL B-23932 / Pf-5), this protein is Uracil phosphoribosyltransferase.